Here is a 194-residue protein sequence, read N- to C-terminus: Large ribosomal subunit protein eL15 (194 aa).

The tract at residues 164 to 194 (SAGKKGRGLRNKGKGAEKIRPSIRANEGKGK) is disordered. The segment covering 167-176 (KKGRGLRNKG) has biased composition (basic residues). The span at 177–194 (KGAEKIRPSIRANEGKGK) shows a compositional bias: basic and acidic residues.

Belongs to the eukaryotic ribosomal protein eL15 family.

The protein is Large ribosomal subunit protein eL15 (rpl15e) of Pyrococcus abyssi (strain GE5 / Orsay).